The sequence spans 145 residues: 3-hydroxyacyl-[acyl-carrier-protein] dehydratase FabZ (145 aa).

Residue His-49 is part of the active site.

It belongs to the thioester dehydratase family. FabZ subfamily.

The protein localises to the cytoplasm. It catalyses the reaction a (3R)-hydroxyacyl-[ACP] = a (2E)-enoyl-[ACP] + H2O. Involved in unsaturated fatty acids biosynthesis. Catalyzes the dehydration of short chain beta-hydroxyacyl-ACPs and long chain saturated and unsaturated beta-hydroxyacyl-ACPs. This is 3-hydroxyacyl-[acyl-carrier-protein] dehydratase FabZ from Rickettsia conorii (strain ATCC VR-613 / Malish 7).